An 88-amino-acid chain; its full sequence is Small ribosomal subunit protein uS15 (88 aa).

The segment covering 1 to 20 (MLATEKKQELIDQYKRHEGD) has biased composition (basic and acidic residues). The disordered stretch occupies residues 1–21 (MLATEKKQELIDQYKRHEGDT).

The protein belongs to the universal ribosomal protein uS15 family. In terms of assembly, part of the 30S ribosomal subunit. Forms a bridge to the 50S subunit in the 70S ribosome, contacting the 23S rRNA.

One of the primary rRNA binding proteins, it binds directly to 16S rRNA where it helps nucleate assembly of the platform of the 30S subunit by binding and bridging several RNA helices of the 16S rRNA. Its function is as follows. Forms an intersubunit bridge (bridge B4) with the 23S rRNA of the 50S subunit in the ribosome. In Syntrophotalea carbinolica (strain DSM 2380 / NBRC 103641 / GraBd1) (Pelobacter carbinolicus), this protein is Small ribosomal subunit protein uS15.